We begin with the raw amino-acid sequence, 294 residues long: Phosphatidylserine decarboxylase proenzyme (294 aa).

Residues D113, H169, and S256 each act as charge relay system; for autoendoproteolytic cleavage activity in the active site. Residue S256 is the Schiff-base intermediate with substrate; via pyruvic acid; for decarboxylase activity of the active site. The residue at position 256 (S256) is a Pyruvic acid (Ser); by autocatalysis.

This sequence belongs to the phosphatidylserine decarboxylase family. PSD-B subfamily. Prokaryotic type II sub-subfamily. In terms of assembly, heterodimer of a large membrane-associated beta subunit and a small pyruvoyl-containing alpha subunit. It depends on pyruvate as a cofactor. Post-translationally, is synthesized initially as an inactive proenzyme. Formation of the active enzyme involves a self-maturation process in which the active site pyruvoyl group is generated from an internal serine residue via an autocatalytic post-translational modification. Two non-identical subunits are generated from the proenzyme in this reaction, and the pyruvate is formed at the N-terminus of the alpha chain, which is derived from the carboxyl end of the proenzyme. The autoendoproteolytic cleavage occurs by a canonical serine protease mechanism, in which the side chain hydroxyl group of the serine supplies its oxygen atom to form the C-terminus of the beta chain, while the remainder of the serine residue undergoes an oxidative deamination to produce ammonia and the pyruvoyl prosthetic group on the alpha chain. During this reaction, the Ser that is part of the protease active site of the proenzyme becomes the pyruvoyl prosthetic group, which constitutes an essential element of the active site of the mature decarboxylase.

Its subcellular location is the cell membrane. The enzyme catalyses a 1,2-diacyl-sn-glycero-3-phospho-L-serine + H(+) = a 1,2-diacyl-sn-glycero-3-phosphoethanolamine + CO2. It functions in the pathway phospholipid metabolism; phosphatidylethanolamine biosynthesis; phosphatidylethanolamine from CDP-diacylglycerol: step 2/2. Functionally, catalyzes the formation of phosphatidylethanolamine (PtdEtn) from phosphatidylserine (PtdSer). This is Phosphatidylserine decarboxylase proenzyme from Clostridium perfringens (strain ATCC 13124 / DSM 756 / JCM 1290 / NCIMB 6125 / NCTC 8237 / Type A).